Consider the following 102-residue polypeptide: Legumin-like protein Mac i 2 (102 aa).

Belongs to the 11S seed storage protein (globulins) family.

Functionally, seed storage protein. The protein is Legumin-like protein Mac i 2 of Macadamia integrifolia (Macadamia nut).